A 303-amino-acid chain; its full sequence is Crk-like protein (303 aa).

Residues 14-102 enclose the SH2 domain; sequence WYMGPVSRQE…LDTTTLIEPA (89 aa). In terms of domain architecture, SH3 1 spans 123 to 183; it reads DNLEYVRTLY…PVPYVEKLVR (61 aa). Phosphotyrosine is present on residues Y127 and Y207. The disordered stretch occupies residues 184 to 234; it reads SSPHGKHGNRNSNSYGIPEPAHAYAQPQTTTPLPAVSGSPGAAITPLPSTQ. The 62-residue stretch at 235–296 folds into the SH3 2 domain; that stretch reads NGPVFAKAIQ…PFTHVKIFDP (62 aa).

It belongs to the CRK family. Interacts with tyrosine-phosphorylated EPOR and INPP5D/SHIP1. Interacts with DOCK2 and DOCK5 via its first SH3 domain. Interacts with phosphorylated CBLB and IRS4. Interacts with BCAR1/CAS and NEDD9/HEF1.

Functionally, may mediate the transduction of intracellular signals. In Homo sapiens (Human), this protein is Crk-like protein (CRKL).